The primary structure comprises 45 residues: Photosystem II reaction center protein K (45 aa).

The propeptide occupies 1-8; sequence MEGILFLA. A helical transmembrane segment spans residues 24-44; the sequence is APVIPVFFLLLAFVWQAAVGF.

This sequence belongs to the PsbK family. As to quaternary structure, PSII is composed of 1 copy each of membrane proteins PsbA, PsbB, PsbC, PsbD, PsbE, PsbF, PsbH, PsbI, PsbJ, PsbK, PsbL, PsbM, PsbT, PsbX, PsbY, PsbZ, Psb30/Ycf12, at least 3 peripheral proteins of the oxygen-evolving complex and a large number of cofactors. It forms dimeric complexes.

Its subcellular location is the plastid. The protein resides in the chloroplast thylakoid membrane. One of the components of the core complex of photosystem II (PSII). PSII is a light-driven water:plastoquinone oxidoreductase that uses light energy to abstract electrons from H(2)O, generating O(2) and a proton gradient subsequently used for ATP formation. It consists of a core antenna complex that captures photons, and an electron transfer chain that converts photonic excitation into a charge separation. This chain is Photosystem II reaction center protein K, found in Guillardia theta (Cryptophyte).